The primary structure comprises 188 residues: MARPISFVTGNAKKLEEVRAILGARFPREIVAVKLDLPELQGEIDDICKLKCLEAARQVKGPVMVEDTCLCFNALKGLPGPYIKWFLDKLGPEGLHKLLDGWEDKSAQAVCTFAYTDRPDGEVILFQGRTEGDIVAPRGPRDFGWDPVFQPTGYDQTYAELPKPKKNEISHRYRALAKLAEHFADESK.

9 to 14 (TGNAKK) provides a ligand contact to ITP. Residue glutamate 39 coordinates Mg(2+). ITP is bound by residues lysine 51, 67–68 (DT), lysine 84, 143–146 (FGWD), lysine 166, and 171–172 (HR).

This sequence belongs to the HAM1 NTPase family. As to quaternary structure, homodimer. It depends on Mg(2+) as a cofactor. The cofactor is Mn(2+).

Its subcellular location is the cytoplasm. It catalyses the reaction ITP + H2O = IMP + diphosphate + H(+). It carries out the reaction dITP + H2O = dIMP + diphosphate + H(+). The catalysed reaction is XTP + H2O = XMP + diphosphate + H(+). Pyrophosphatase that hydrolyzes non-canonical purine nucleotides such as inosine triphosphate (ITP), deoxyinosine triphosphate (dITP) or xanthosine 5'-triphosphate (XTP) to their respective monophosphate derivatives. The enzyme does not distinguish between the deoxy- and ribose forms. Probably excludes non-canonical purines from RNA and DNA precursor pools, thus preventing their incorporation into RNA and DNA and avoiding chromosomal lesions. This is Inosine triphosphate pyrophosphatase from Anopheles gambiae (African malaria mosquito).